A 1549-amino-acid chain; its full sequence is FERM and PDZ domain-containing protein 1 (1549 aa).

Residues T57–T135 form the PDZ domain. Residues N181–A496 form the FERM domain. 7 disordered regions span residues A554–D618, S717–W738, Y775–S834, S913–I1046, S1097–E1174, L1231–P1257, and P1321–Q1347. Positions S717–R730 are enriched in polar residues. Residues E924–K931 form an important for interaction with GPSM2 region. A compositionally biased stretch (polar residues) spans P950–G961. The segment covering S962–P980 has biased composition (low complexity). Basic and acidic residues predominate over residues S1117–D1130.

As to quaternary structure, interacts with GPSM1. Interacts with GPSM2.

It is found in the cytoplasm. The protein localises to the cytosol. Its subcellular location is the cell membrane. Stabilizes membrane-bound GPSM1, and thereby promotes its interaction with GNAI1. This is FERM and PDZ domain-containing protein 1 (Frmpd1) from Mus musculus (Mouse).